A 103-amino-acid chain; its full sequence is Small ribosomal subunit protein uS10 (103 aa).

It belongs to the universal ribosomal protein uS10 family. In terms of assembly, part of the 30S ribosomal subunit.

Involved in the binding of tRNA to the ribosomes. In Borrelia recurrentis (strain A1), this protein is Small ribosomal subunit protein uS10.